Reading from the N-terminus, the 280-residue chain is 4-diphosphocytidyl-2-C-methyl-D-erythritol kinase (280 aa).

Residue lysine 8 is part of the active site. An ATP-binding site is contributed by proline 91–threonine 101. Residue aspartate 133 is part of the active site.

Belongs to the GHMP kinase family. IspE subfamily.

The catalysed reaction is 4-CDP-2-C-methyl-D-erythritol + ATP = 4-CDP-2-C-methyl-D-erythritol 2-phosphate + ADP + H(+). It functions in the pathway isoprenoid biosynthesis; isopentenyl diphosphate biosynthesis via DXP pathway; isopentenyl diphosphate from 1-deoxy-D-xylulose 5-phosphate: step 3/6. Functionally, catalyzes the phosphorylation of the position 2 hydroxy group of 4-diphosphocytidyl-2C-methyl-D-erythritol. The polypeptide is 4-diphosphocytidyl-2-C-methyl-D-erythritol kinase (Clostridium botulinum (strain Okra / Type B1)).